The chain runs to 362 residues: Meiotic recombination protein SPO11-1 (362 aa).

One can recognise a Topo IIA-type catalytic domain in the interval 8–142 (SESTNLLQRI…LNVVSVGNGL (135 aa)). Y103 (O-(5'-phospho-DNA)-tyrosine intermediate) is an active-site residue. Mg(2+) is bound by residues E189 and D241.

This sequence belongs to the TOP6A family. As to quaternary structure, heterotetramer of 2 SPO11 (SPO11-1 and/or SPO11-2) and 2 MTOPVIB chains. Interacts with MTOPVIB. May form a heterodimer with SPO11-2. Interacts with PRD1. Does not interact with TOP6B. Mg(2+) is required as a cofactor. In terms of tissue distribution, expressed in shoots, young seedlings, flowers and reproductive tissues. Not found in roots or rosette leaves.

It is found in the nucleus. It carries out the reaction ATP-dependent breakage, passage and rejoining of double-stranded DNA.. In terms of biological role, component of a topoisomerase 6 complex specifically required for meiotic recombination. Together with MTOPVIB, mediates DNA cleavage that forms the double-strand breaks (DSB) that initiate meiotic recombination. The complex promotes relaxation of negative and positive supercoiled DNA and DNA decatenation through cleavage and ligation cycles. This chain is Meiotic recombination protein SPO11-1, found in Arabidopsis thaliana (Mouse-ear cress).